A 578-amino-acid polypeptide reads, in one-letter code: Putative multidrug export ATP-binding/permease protein SAB1799c (578 aa).

The Cytoplasmic segment spans residues 1–15 (MIKRYLQFVKPYKYR). Residues 16–36 (IFATIIVGIIKFGIPMLIPLL) traverse the membrane as a helical segment. Residues 16 to 306 (IFATIIVGII…LVASFTTLTQ (291 aa)) form the ABC transmembrane type-1 domain. Residues 37-59 (IKYAIDGVINNHALTTDEKVHHL) lie on the Extracellular side of the membrane. A helical transmembrane segment spans residues 60–80 (TIAIGIALFIFVIVRPPIEFI). Topologically, residues 81–138 (RQYLAQWTSNKILYDIRKKLYNHLQALSARFYANNQVGQVISRVINDVEQTKDFILTG) are cytoplasmic. Residues 139–159 (LMNIWLDCITIIIALSIMFFL) form a helical membrane-spanning segment. Residues 160–162 (DVK) lie on the Extracellular side of the membrane. The helical transmembrane segment at 163–183 (LTLAALFIFPFYILTVYVFFG) threads the bilayer. Topologically, residues 184-242 (RLRKLTRERSQALAEVQGFLHERVQGISVVKSFAIEDNEAKNFDKKNANFLTRALKHTR) are cytoplasmic. A helical membrane pass occupies residues 243–262 (WNAYSFATINTVTDIGPIIV). Over 263–267 (IGVGA) the chain is Extracellular. Residues 268-287 (YLAISGSITVGTLAAFVGYL) traverse the membrane as a helical segment. Residues 288-578 (ELLFGPLRRL…YEHLYSIQNL (291 aa)) lie on the Cytoplasmic side of the membrane. Residues 340–575 (IDIYHVNFQY…QGAYEHLYSI (236 aa)) form the ABC transporter domain. 374 to 381 (GMSGGGKS) provides a ligand contact to ATP.

The protein belongs to the ABC transporter superfamily. Homodimer.

It localises to the cell membrane. May be involved in multidrug export. Transmembrane domains (TMD) form a pore in the cell membrane and the ATP-binding domain (NBD) is responsible for energy generation. The polypeptide is Putative multidrug export ATP-binding/permease protein SAB1799c (Staphylococcus aureus (strain bovine RF122 / ET3-1)).